Reading from the N-terminus, the 414-residue chain is Serine/threonine transporter SstT (414 aa).

The Cytoplasmic portion of the chain corresponds to 2–15; sequence TTQRSPGLFRRLAH. Residues 16–36 form a helical membrane-spanning segment; sequence GSLVKQILVGLVLGILLAWIS. At 37–45 the chain is on the periplasmic side; that stretch reads KPAAEAVGL. The helical transmembrane segment at 46-66 threads the bilayer; the sequence is LGTLFVGALKAVAPILVLMLV. The Cytoplasmic segment spans residues 67-83; it reads MASIANHQHGQKTNILP. A helical transmembrane segment spans residues 84–104; the sequence is ILFLYLLGTFSAALAAVVFSF. The Periplasmic portion of the chain corresponds to 105–142; sequence AFPSTLHLSSSAGDISPPSGIVEVMRGLVMSMVSNPID. The helical transmembrane segment at 143-163 threads the bilayer; it reads ALLKGNYIGILVWAIGLGFAL. The Cytoplasmic portion of the chain corresponds to 164–179; the sequence is RHGNETTKNLVNDMSN. The chain crosses the membrane as a helical span at residues 180-200; the sequence is AVTFMVKLVIRFAPIGIFGLV. The Periplasmic portion of the chain corresponds to 201–217; the sequence is SSTLATTGFSTLWGYAQ. Residues 218-238 traverse the membrane as a helical segment; sequence LLVVLVGCMLLVALVVNPLLV. The Cytoplasmic portion of the chain corresponds to 239–299; it reads WWKIRRNPFP…VSIPLGATIN (61 aa). A helical transmembrane segment spans residues 300 to 320; sequence MAGAAITITVLTLAAVNTLGI. Topologically, residues 321-331 are periplasmic; the sequence is PVDLPTALLLS. Residues 332-352 form a helical membrane-spanning segment; sequence VVASLCACGASGVAGGSLLLI. Residues 353 to 414 are Cytoplasmic-facing; that stretch reads PLACNMFGIS…DRLANSALRN (62 aa).

It belongs to the dicarboxylate/amino acid:cation symporter (DAACS) (TC 2.A.23) family.

It localises to the cell inner membrane. The enzyme catalyses L-serine(in) + Na(+)(in) = L-serine(out) + Na(+)(out). It carries out the reaction L-threonine(in) + Na(+)(in) = L-threonine(out) + Na(+)(out). Involved in the import of serine and threonine into the cell, with the concomitant import of sodium (symport system). In Shigella dysenteriae serotype 1 (strain Sd197), this protein is Serine/threonine transporter SstT.